The following is a 1645-amino-acid chain: Protein MON2 homolog (1645 aa).

This sequence belongs to the MON2 family.

Its function is as follows. May be required for traffic between late Golgi and early endosomes. This chain is Protein MON2 homolog, found in Caenorhabditis briggsae.